A 28-amino-acid chain; its full sequence is Mast cell degranulating peptide (28 aa).

2 cysteine pairs are disulfide-bonded: Cys-2–Cys-18 and Cys-4–Cys-22.

As to expression, expressed by the venom gland.

The protein resides in the secreted. Functionally, mast cell degranulating peptide. The sequence is that of Mast cell degranulating peptide from Bombus pensylvanicus (American bumblebee).